An 840-amino-acid polypeptide reads, in one-letter code: Heat shock 70 kDa protein 4 (840 aa).

Residue Lys53 is modified to N6-acetyllysine. Phosphoserine is present on Ser76. Phosphotyrosine occurs at positions 89 and 336. Phosphoserine occurs at positions 393 and 415. N6-acetyllysine is present on Lys430. Positions 500–575 (VHKSEENEEP…QAKKAKVKTS (76 aa)) are disordered. Residues 514–533 (QNAKEEEKMQVDQEEPHVEE) are compositionally biased toward basic and acidic residues. At Thr538 the chain carries Phosphothreonine. A phosphoserine mark is found at Ser546 and Ser647. Tyr660 is modified (phosphotyrosine). Position 679 is an N6-acetyllysine (Lys679). A Phosphoserine modification is found at Ser756. Lys773 carries the post-translational modification N6-methyllysine. The tract at residues 779-840 (CSPIISKPKP…DKKLPEMDID (62 aa)) is disordered. 2 stretches are compositionally biased toward basic and acidic residues: residues 788 to 799 (PKVEPPKEEQKN) and 829 to 840 (DSDKKLPEMDID).

The protein belongs to the heat shock protein 70 family. In terms of assembly, interacts with TJP1/ZO-1.

It localises to the cytoplasm. The polypeptide is Heat shock 70 kDa protein 4 (HSPA4) (Homo sapiens (Human)).